Consider the following 369-residue polypeptide: Carbamoyl phosphate synthase small chain (369 aa).

The CPSase stretch occupies residues 1–168 (MYGILVLEDG…KKVVKYPAKD (168 aa)). L-glutamine-binding residues include serine 45, glycine 220, and glycine 222. Positions 172 to 364 (SCVVIDCGVK…VALGMKFKQE (193 aa)) constitute a Glutamine amidotransferase type-1 domain. The active-site Nucleophile is cysteine 247. Positions 248, 251, 289, 291, and 292 each coordinate L-glutamine. Catalysis depends on residues histidine 337 and glutamate 339.

Belongs to the CarA family. In terms of assembly, composed of two chains; the small (or glutamine) chain promotes the hydrolysis of glutamine to ammonia, which is used by the large (or ammonia) chain to synthesize carbamoyl phosphate. Tetramer of heterodimers (alpha,beta)4.

It catalyses the reaction hydrogencarbonate + L-glutamine + 2 ATP + H2O = carbamoyl phosphate + L-glutamate + 2 ADP + phosphate + 2 H(+). The catalysed reaction is L-glutamine + H2O = L-glutamate + NH4(+). Its pathway is amino-acid biosynthesis; L-arginine biosynthesis; carbamoyl phosphate from bicarbonate: step 1/1. It functions in the pathway pyrimidine metabolism; UMP biosynthesis via de novo pathway; (S)-dihydroorotate from bicarbonate: step 1/3. Small subunit of the glutamine-dependent carbamoyl phosphate synthetase (CPSase). CPSase catalyzes the formation of carbamoyl phosphate from the ammonia moiety of glutamine, carbonate, and phosphate donated by ATP, constituting the first step of 2 biosynthetic pathways, one leading to arginine and/or urea and the other to pyrimidine nucleotides. The small subunit (glutamine amidotransferase) binds and cleaves glutamine to supply the large subunit with the substrate ammonia. In Methanococcus vannielii (strain ATCC 35089 / DSM 1224 / JCM 13029 / OCM 148 / SB), this protein is Carbamoyl phosphate synthase small chain.